We begin with the raw amino-acid sequence, 280 residues long: S-methyl-5'-thioadenosine phosphorylase (280 aa).

Residues Ser15, 57-58 (RH), and 90-91 (TA) each bind phosphate. Position 193 (Met193) interacts with substrate. Thr194 is a phosphate binding site. Position 217-219 (217-219 (DYD)) interacts with substrate.

This sequence belongs to the PNP/MTAP phosphorylase family. MTAP subfamily. As to quaternary structure, homotrimer.

It localises to the cytoplasm. The protein resides in the nucleus. The catalysed reaction is S-methyl-5'-thioadenosine + phosphate = 5-(methylsulfanyl)-alpha-D-ribose 1-phosphate + adenine. The protein operates within amino-acid biosynthesis; L-methionine biosynthesis via salvage pathway; S-methyl-5-thio-alpha-D-ribose 1-phosphate from S-methyl-5'-thioadenosine (phosphorylase route): step 1/1. Catalyzes the reversible phosphorylation of S-methyl-5'-thioadenosine (MTA) to adenine and 5-methylthioribose-1-phosphate. Involved in the breakdown of MTA, a major by-product of polyamine biosynthesis. Responsible for the first step in the methionine salvage pathway after MTA has been generated from S-adenosylmethionine. Has broad substrate specificity with 6-aminopurine nucleosides as preferred substrates. The chain is S-methyl-5'-thioadenosine phosphorylase (mtap) from Danio rerio (Zebrafish).